The following is a 297-amino-acid chain: Inosose dehydratase (297 aa).

The protein belongs to the IolE/MocC family. The cofactor is glutathione. Co(2+) serves as cofactor. Mn(2+) is required as a cofactor.

The catalysed reaction is scyllo-inosose = 3D-3,5/4-trihydroxycyclohexane-1,2-dione + H2O. It participates in polyol metabolism; myo-inositol degradation into acetyl-CoA; acetyl-CoA from myo-inositol: step 2/7. Functionally, catalyzes the dehydration of inosose (2-keto-myo-inositol, 2KMI or 2,4,6/3,5-pentahydroxycyclohexanone) to 3D-(3,5/4)-trihydroxycyclohexane-1,2-dione (D-2,3-diketo-4-deoxy-epi-inositol). The sequence is that of Inosose dehydratase from Clostridium perfringens (strain 13 / Type A).